Reading from the N-terminus, the 158-residue chain is Endoribonuclease YbeY (158 aa).

His-122, His-126, and His-132 together coordinate Zn(2+).

The protein belongs to the endoribonuclease YbeY family. The cofactor is Zn(2+).

The protein resides in the cytoplasm. Its function is as follows. Single strand-specific metallo-endoribonuclease involved in late-stage 70S ribosome quality control and in maturation of the 3' terminus of the 16S rRNA. This Bacillus licheniformis (strain ATCC 14580 / DSM 13 / JCM 2505 / CCUG 7422 / NBRC 12200 / NCIMB 9375 / NCTC 10341 / NRRL NRS-1264 / Gibson 46) protein is Endoribonuclease YbeY.